A 474-amino-acid polypeptide reads, in one-letter code: ATP synthase subunit beta (474 aa).

Residue 153-160 (GGAGVGKT) coordinates ATP.

This sequence belongs to the ATPase alpha/beta chains family. As to quaternary structure, F-type ATPases have 2 components, CF(1) - the catalytic core - and CF(0) - the membrane proton channel. CF(1) has five subunits: alpha(3), beta(3), gamma(1), delta(1), epsilon(1). CF(0) has three main subunits: a(1), b(2) and c(9-12). The alpha and beta chains form an alternating ring which encloses part of the gamma chain. CF(1) is attached to CF(0) by a central stalk formed by the gamma and epsilon chains, while a peripheral stalk is formed by the delta and b chains.

It is found in the cell inner membrane. It carries out the reaction ATP + H2O + 4 H(+)(in) = ADP + phosphate + 5 H(+)(out). Its function is as follows. Produces ATP from ADP in the presence of a proton gradient across the membrane. The catalytic sites are hosted primarily by the beta subunits. The polypeptide is ATP synthase subunit beta (Neorickettsia sennetsu (strain ATCC VR-367 / Miyayama) (Ehrlichia sennetsu)).